The chain runs to 351 residues: MGSLSDISFFDHLQELARRDCCVNALLWCAFTVGAVKLTTFMLSLISIALETTVLPSASYKKYGARKGAYALVTGASDGIGKEFALQLASKGFNVLLVSRTEAKLLELKQEIMAKYKVDARVLSVDFGVDNRLTYTAISELCGELPVTVLVNNVGVSHSIPVSFLETTEEELRGIITVNNTATLMVTQTVAPLVIANARRLQCRGLVLTMGSFGGLLPTPLLATYSGSKAFLQAWSAALAGELAPHNVDVQIVLSYLVTSAMSKVRRASALIPTPRAFVRSTLASLGRRVGAQERYATCTPYWSHALYHFLIENTVGVHSRLANAINYRFHADIRKRALRKAARKAAEKQE.

Residues 26–46 form a helical membrane-spanning segment; sequence LLWCAFTVGAVKLTTFMLSLI. Positions 72, 126, 153, 225, 229, 258, and 260 each coordinate NADP(+). Tyr-225 (proton donor) is an active-site residue. Residue Lys-229 is the Lowers pKa of active site Tyr of the active site.

This sequence belongs to the short-chain dehydrogenases/reductases (SDR) family.

It is found in the endoplasmic reticulum membrane. It catalyses the reaction a very-long-chain (3R)-3-hydroxyacyl-CoA + NADP(+) = a very-long-chain 3-oxoacyl-CoA + NADPH + H(+). Its pathway is lipid metabolism; fatty acid biosynthesis. Functionally, component of the microsomal membrane bound fatty acid elongation system, which produces the 26-carbon very long-chain fatty acids (VLCFA) from palmitate. Catalyzes the reduction of the 3-ketoacyl-CoA intermediate that is formed in each cycle of fatty acid elongation. VLCFAs serve as precursors for ceramide and sphingolipids. The chain is Very-long-chain 3-oxoacyl-CoA reductase from Eremothecium gossypii (strain ATCC 10895 / CBS 109.51 / FGSC 9923 / NRRL Y-1056) (Yeast).